Reading from the N-terminus, the 187-residue chain is Transmembrane protein 212 (187 aa).

A run of 5 helical transmembrane segments spans residues 11-31 (TLVT…FPVF), 42-62 (VWIA…SLVL), 76-96 (AVFT…TVAL), 106-126 (FYSF…TFPF), and 148-168 (LQVL…AVFI).

Its subcellular location is the membrane. The sequence is that of Transmembrane protein 212 (Tmem212) from Mus musculus (Mouse).